A 77-amino-acid chain; its full sequence is Ras-related C3 botulinum toxin substrate 1 (77 aa).

22–24 (KLD) is a binding site for GTP. Lysine 53 participates in a covalent cross-link: Glycyl lysine isopeptide (Lys-Gly) (interchain with G-Cter in ubiquitin). Residue 65–66 (AL) coordinates GTP.

Belongs to the small GTPase superfamily. Rho family. As to quaternary structure, interacts with NISCH. Interacts with PIP5K1A. Interacts with the GTP-bound form of RAB7A. Interacts with SRGAP2. Interacts with CYFIP1/SRA-1. Interacts with PLXNB3. Interacts with ARHGDIA; the interaction is induced by SEMA5A, mediated through PLXNB3 and inactivates and stabilizes RAC1. Interacts (GTP-bound form preferentially) with PKN2 (via the REM repeats); the interaction stimulates autophosphorylation and phosphorylation of PKN2. Interacts with the GEF proteins PREX1, RASGRF2, FARP1, FARP2, DOCK1, DOCK2 and DOCK7, which promote the exchange between GDP and GTP, and therefore activate it. Interacts with PARD6A, PARD6B and PARD6G in a GTP-dependent manner. Part of a quaternary complex containing PARD3, some PARD6 protein (PARD6A, PARD6B or PARD6G) and some atypical PKC protein (PRKCI or PRKCZ), which plays a central role in epithelial cell polarization. Found in a trimeric complex composed of DOCK1 and ELMO1, which plays a central role in phagocytosis of apoptotic cells. Interacts with RALBP1 via its effector domain. Interacts with PLXNB1. Part of a complex with MAP2K3, MAP3K3, CCM2 and DEF6. Interacts with BAIAP2, BAIAP2L1 and DEF6. Interacts with Y.pseudotuberculosis YPKA and PLCB2. Interacts with NOXA1. Interacts with ARHGEF2. Interacts with TBC1D2. Interacts with UNKL. Interacts with USP6. Interacts with SPATA13. Interacts with ARHGEF16; mediates activation of RAC1 by EPHA2. Interacts with ITGB4. Interacts with S100A8 and calprotectin (S100A8/9). Interacts with PACSIN2. Interacts (when active) with PPP5C (via TPR repeats); activates PPP5C phosphatase activity and translocates PPP5C to the cell membrane. Interacts with RAPH1 (via Ras associating and PH domains). Interacts with MTSS2 (via IMD domain); this interaction may be important to potentiate PDGF-induced RAC1 activation. Interacts with PAK2. Interacts (GTP-bound form) with SH3RF1 and SH3RF3. Found in a complex with SH3RF1, MAPK8IP1/JIP1, MAP3K11/MLK3, MAP2K7/MKK7 and MAPK8/JNK1. Interacts (both active GTP- or inactive GDP-bound forms) with SH3RF2. Interacts (GTP-bound form preferentially) with CYRIB. Interacts with DOCK4 (via DOCKER domain); functions as a guanine nucleotide exchange factor (GEF) for RAC1. Interacts with GARRE1. Interacts with RAP1GDS1. May interact with ARHGAP36. Interacts with DSG3; the interaction is required for DSG3 translocation to cell-cell junctions, organization of cortical F-actin bundles and actin anchoring at cell-cell junctions. Component of the phagocyte NADPH oxidase complex composed of an obligatory core heterodimer formed by the membrane proteins CYBA and CYBB and the cytosolic regulatory subunits NCF1/p47-phox, NCF2/p67-phox, NCF4/p40-phox and the small GTPase RAC1 or RAC2. Interacts with NCF2. Post-translationally, the N-terminus is blocked. GTP-bound active form is ubiquitinated by HACE1, leading to its degradation by the proteasome.

The protein localises to the cytoplasm. It localises to the membrane. Its subcellular location is the melanosome. It is found in the cell projection. The protein resides in the lamellipodium. The protein localises to the dendrite. It localises to the synapse. Its subcellular location is the nucleus. It carries out the reaction GTP + H2O = GDP + phosphate + H(+). Regulated by guanine nucleotide exchange factors (GEFs) which promote the exchange of bound GDP for free GTP, GTPase activating proteins (GAPs) which increase the GTP hydrolysis activity, and GDP dissociation inhibitors which inhibit the dissociation of the nucleotide from the GTPase. GTP hydrolysis is stimulated by ARHGAP30. In terms of biological role, plasma membrane-associated small GTPase which cycles between active GTP-bound and inactive GDP-bound states. In its active state, binds to a variety of effector proteins to regulate cellular responses such as secretory processes, phagocytosis of apoptotic cells, epithelial cell polarization, neurons adhesion, migration and differentiation, and growth-factor induced formation of membrane ruffles. Rac1 p21/rho GDI heterodimer is the active component of the cytosolic factor sigma 1, which is involved in stimulation of the NADPH oxidase activity in macrophages. Essential for the SPATA13-mediated regulation of cell migration and adhesion assembly and disassembly. Stimulates PKN2 kinase activity. In concert with RAB7A, plays a role in regulating the formation of RBs (ruffled borders) in osteoclasts. In podocytes, promotes nuclear shuttling of NR3C2; this modulation is required for a proper kidney functioning. Required for atypical chemokine receptor ACKR2-induced LIMK1-PAK1-dependent phosphorylation of cofilin (CFL1) and for up-regulation of ACKR2 from endosomal compartment to cell membrane, increasing its efficiency in chemokine uptake and degradation. In neurons, is involved in dendritic spine formation and synaptic plasticity. In hippocampal neurons, involved in spine morphogenesis and synapse formation, through local activation at synapses by guanine nucleotide exchange factors (GEFs), such as ARHGEF6/ARHGEF7/PIX. In synapses, seems to mediate the regulation of F-actin cluster formation performed by SHANK3. In neurons, plays a crucial role in regulating GABA(A) receptor synaptic stability and hence GABAergic inhibitory synaptic transmission through its role in PAK1 activation and eventually F-actin stabilization. Required for DSG3 translocation to cell-cell junctions, DSG3-mediated organization of cortical F-actin bundles and anchoring of actin at cell junctions; via interaction with DSG3. Subunit of the phagocyte NADPH oxidase complex that mediates the transfer of electrons from cytosolic NADPH to O2 to produce the superoxide anion (O2(-)). This chain is Ras-related C3 botulinum toxin substrate 1, found in Cavia porcellus (Guinea pig).